The following is a 722-amino-acid chain: Probable glycerol-3-phosphate dehydrogenase, mitochondrial (722 aa).

The N-terminal 43 residues, 1 to 43 (MSWVRFTKTGVAVVATSAAAVLALDMTNERRFQRQVKDHFRTV), are a transit peptide targeting the mitochondrion. An FAD-binding site is contributed by 76–104 (DVLIIGGGATGAGVALDAQTRGLKTALVE). EF-hand domains are found at residues 624-659 (EEMQ…HNQK) and 660-695 (IDER…LKGG). 5 residues coordinate Ca(2+): D673, N675, N677, E679, and E684.

This sequence belongs to the FAD-dependent glycerol-3-phosphate dehydrogenase family. Requires FAD as cofactor.

Its subcellular location is the mitochondrion. The enzyme catalyses a quinone + sn-glycerol 3-phosphate = dihydroxyacetone phosphate + a quinol. It functions in the pathway polyol metabolism; glycerol degradation via glycerol kinase pathway; glycerone phosphate from sn-glycerol 3-phosphate (anaerobic route): step 1/1. With respect to regulation, calcium-binding enhances the activity of the enzyme. This chain is Probable glycerol-3-phosphate dehydrogenase, mitochondrial, found in Caenorhabditis elegans.